A 537-amino-acid polypeptide reads, in one-letter code: Beta-hexosaminidase subunit beta (537 aa).

The first 23 residues, 1-23, serve as a signal peptide directing secretion; that stretch reads MPGSPRRAPGLLLQALVAMVSLA. Residue asparagine 62 is glycosylated (N-linked (GlcNAc...) asparagine). A disulfide bridge links cysteine 69 with cysteine 115. 2 N-linked (GlcNAc...) asparagine glycosylation sites follow: asparagine 168 and asparagine 305. 2 disulfide bridges follow: cysteine 287-cysteine 338 and cysteine 512-cysteine 529. The active-site Proton donor is the glutamate 333.

It belongs to the glycosyl hydrolase 20 family. As to quaternary structure, there are 3 forms of beta-hexosaminidase: hexosaminidase A is a heterodimer composed of one subunit alpha and one subunit beta (chain A and B); hexosaminidase B is a homodimer of two beta subunits (two chains A and B); hexosaminidase S is a homodimer of two alpha subunits. The composition of the dimer (isozyme A versus isozyme S) has a significant effect on the substrate specificity of the alpha subunit active site.

It localises to the lysosome. The protein resides in the cytoplasmic vesicle. It is found in the secretory vesicle. The protein localises to the cortical granule. It catalyses the reaction Hydrolysis of terminal non-reducing N-acetyl-D-hexosamine residues in N-acetyl-beta-D-hexosaminides.. The catalysed reaction is N-acetyl-beta-D-galactosaminyl-(1-&gt;4)-beta-D-3-sulfogalactosyl-(1-&gt;4)-beta-D-glucosyl-(1&lt;-&gt;1')-ceramide + H2O = a beta-D-3-sulfogalactosyl-(1-&gt;4)-beta-D-glucosyl-(1&lt;-&gt;1')-ceramide + N-acetyl-beta-D-galactosamine. The enzyme catalyses a ganglioside GM2 (d18:1(4E)) + H2O = a ganglioside GM3 (d18:1(4E)) + N-acetyl-beta-D-galactosamine. It carries out the reaction a ganglioside GM2 + H2O = a ganglioside GM3 + N-acetyl-beta-D-galactosamine. It catalyses the reaction beta-D-GalNAc-(1-&gt;4)-alpha-L-IdoA-(1-&gt;3)-beta-D-GalNAc-4-sulfate-(1-&gt;4)-alpha-L-IdoA-(1-&gt;3)-D-GalNAc-4-sulfate + H2O = alpha-L-IdoA-(1-&gt;3)-beta-D-GalNAc-4-sulfate-(1-&gt;4)-alpha-L-IdoA-(1-&gt;3)-D-GalNAc-4-sulfate + N-acetyl-D-galactosamine. The catalysed reaction is N-acetyl-beta-D-6-sulfogalactosaminyl-(1-&gt;4)-alpha-L-iduronyl-(1-&gt;3)-N-acetyl-D-6-sulfogalactosamine + H2O = alpha-L-iduronyl-(1-&gt;3)-N-acetyl-D-6-sulfogalactosamine + N-acetyl-D-6-sulfogalactosamine. With respect to regulation, addition of GM2A stimulates the hydrolysis of sulfated glycosphingolipid SM2 and the ganglioside GM2. In terms of biological role, hydrolyzes the non-reducing end N-acetyl-D-hexosamine and/or sulfated N-acetyl-D-hexosamine of glycoconjugates, such as the oligosaccharide moieties from proteins and neutral glycolipids, or from certain mucopolysaccharides. The isozyme B does not hydrolyze each of these substrates, however hydrolyzes efficiently neutral oligosaccharide. Only the isozyme A is responsible for the degradation of GM2 gangliosides in the presence of GM2A. During fertilization is responsible, at least in part, for the zona block to polyspermy. Present in the cortical granules of non-activated oocytes, is exocytosed during the cortical reaction in response to oocyte activation and inactivates the sperm galactosyltransferase-binding site, accounting for the block in sperm binding to the zona pellucida. The polypeptide is Beta-hexosaminidase subunit beta (Rattus norvegicus (Rat)).